We begin with the raw amino-acid sequence, 491 residues long: MEKWWFNSMLSNEKLEYRCGLSKSTDSPDPIENTSGSEDRVINNTDKNINNWSQIKSSSYSNVDHLFGIRDIRNFISDDTFLVRDRNGVSYFIYFDIENQIFEIDNDQSFLSELESFFYSYRNSSYLNNVNSSYLNNVSKSNHPHYDRYMYDTKYSWNKHINSCINNYILSGSNNYSDSYIYSYICGQSRTRSEHGSSSKQTSTNGSDLKSSNVLYVAQKYRHLWIQCENCYGLNYKKNLKSKINICEQCGYHLKMSSSDRIELSIDPGTWDPVDEDMVSLDPIEFHSGEEPYKERIDFYQRKTGLTEAVQTGTGQLNGIPVAIGVMDFQFMGGSMGSVVGEKITRLIEYATNEFLPLILVCSSGGARMQEGSLSLMQMAKISSALYDYQSNKKLFYVSILTSPTTGGVTASFGMLGDIIIAEPNSYIAFAGKRVIEQTLKKTVPEGSQAAEYLFHKGLFDPIVPRNTLKGVLSELFQLHAFFPLNPKKIK.

Positions 224-491 (LWIQCENCYG…FFPLNPKKIK (268 aa)) constitute a CoA carboxyltransferase N-terminal domain. Residues C228, C231, C247, and C250 each coordinate Zn(2+). A C4-type zinc finger spans residues 228 to 250 (CENCYGLNYKKNLKSKINICEQC).

This sequence belongs to the AccD/PCCB family. Acetyl-CoA carboxylase is a heterohexamer composed of biotin carboxyl carrier protein, biotin carboxylase and 2 subunits each of ACCase subunit alpha and ACCase plastid-coded subunit beta (accD). Requires Zn(2+) as cofactor.

The protein localises to the plastid. Its subcellular location is the chloroplast stroma. The catalysed reaction is N(6)-carboxybiotinyl-L-lysyl-[protein] + acetyl-CoA = N(6)-biotinyl-L-lysyl-[protein] + malonyl-CoA. It participates in lipid metabolism; malonyl-CoA biosynthesis; malonyl-CoA from acetyl-CoA: step 1/1. In terms of biological role, component of the acetyl coenzyme A carboxylase (ACC) complex. Biotin carboxylase (BC) catalyzes the carboxylation of biotin on its carrier protein (BCCP) and then the CO(2) group is transferred by the transcarboxylase to acetyl-CoA to form malonyl-CoA. The chain is Acetyl-coenzyme A carboxylase carboxyl transferase subunit beta, chloroplastic from Vitis vinifera (Grape).